The primary structure comprises 839 residues: Enhancer of polycomb-like protein 1 (839 aa).

Disordered stretches follow at residues 350–379, 393–415, 608–640, and 679–839; these read QKKRKVEPKKEEKAEKASTPVRGGKAAGSA, GSGSPSVSSTHVPPNVSIPPSKI, LADRQKYDRETEPTRQMSSYDKDPSQLNGISSD, and QQQQ…KVDA. A compositionally biased stretch (basic and acidic residues) spans 608–620; sequence LADRQKYDRETEP. Over residues 621–640 the composition is skewed to polar residues; that stretch reads TRQMSSYDKDPSQLNGISSD. Residues 679–690 show a composition bias toward low complexity; that stretch reads QQQQQQMRNRQQ. The segment covering 697 to 713 has biased composition (gly residues); sequence PGAGLGGGQGAGGGAGG. A compositionally biased stretch (polar residues) spans 714–730; sequence SRNNSPAPGTNGPQSKM. Residues 747-786 are compositionally biased toward low complexity; the sequence is QHQQYQQMQQQQQQQQQQQQQRKMGVAPMNAASAAAAMAA. Basic and acidic residues predominate over residues 828-839; sequence MKQKSELAKVDA.

It belongs to the enhancer of polycomb family. In terms of assembly, component of the NuA4 histone acetyltransferase complex.

It localises to the nucleus. In terms of biological role, component of the NuA4 histone acetyltransferase complex which is involved in transcriptional activation of selected genes principally by acetylation of nucleosomal histone H4 and H2A. The NuA4 complex is also involved in DNA repair. Involved in gene silencing by neighboring heterochromatin, blockage of the silencing spreading along the chromosome, and required for cell cycle progression through G2/M. The chain is Enhancer of polycomb-like protein 1 (EPL1) from Yarrowia lipolytica (strain CLIB 122 / E 150) (Yeast).